Here is a 471-residue protein sequence, read N- to C-terminus: Membrane-associated sulfotransferase kil1 (471 aa).

At 1–12 (MSTTSMILTKKN) the chain is on the cytoplasmic side. Residues 13-33 (IIILSIIIITIIAYQFYITSP) traverse the membrane as a helical; Signal-anchor for type II membrane protein segment. Residues 34-471 (QSFPSSNTIT…LLNRDFKWQN (438 aa)) lie on the Lumenal side of the membrane. N-linked (GlcNAc...) asparagine glycosylation occurs at asparagine 47. 2 stretches are compositionally biased toward low complexity: residues 89–105 (NQNE…NNNK) and 112–127 (NNNN…NNNN). Residues 89–127 (NQNENQNQINNEYNNNKLNDEQENNNNNNYNNNNNNNNN) form a disordered region. 3'-phosphoadenylyl sulfate contacts are provided by residues 167-172 (KSGTTF), arginine 252, and serine 260. N-linked (GlcNAc...) asparagine glycosylation is found at asparagine 324 and asparagine 344. Tyrosine 348 is a 3'-phosphoadenylyl sulfate binding site.

Belongs to the sulfotransferase 1 family.

The protein resides in the membrane. In terms of biological role, sulfotransferase involved in intracellular killing of bacteria. This chain is Membrane-associated sulfotransferase kil1 (kil1), found in Dictyostelium discoideum (Social amoeba).